A 359-amino-acid chain; its full sequence is Phospho-N-acetylmuramoyl-pentapeptide-transferase (359 aa).

Transmembrane regions (helical) follow at residues 3 to 23 (LILI…PALI), 55 to 75 (VAIL…GMAM), 80 to 100 (PSAS…VGFI), 117 to 137 (TAKT…ALQF), 156 to 176 (IATV…VVSA), 187 to 207 (LDGL…LITF), 231 to 251 (LALV…WNAA), 255 to 275 (IFMG…ISVT), 280 to 300 (ILAV…VVQI), and 334 to 354 (FWLL…GEWL).

The protein belongs to the glycosyltransferase 4 family. MraY subfamily. Mg(2+) serves as cofactor.

It is found in the cell membrane. It carries out the reaction UDP-N-acetyl-alpha-D-muramoyl-L-alanyl-gamma-D-glutamyl-meso-2,6-diaminopimeloyl-D-alanyl-D-alanine + di-trans,octa-cis-undecaprenyl phosphate = di-trans,octa-cis-undecaprenyl diphospho-N-acetyl-alpha-D-muramoyl-L-alanyl-D-glutamyl-meso-2,6-diaminopimeloyl-D-alanyl-D-alanine + UMP. Its pathway is cell wall biogenesis; peptidoglycan biosynthesis. Functionally, catalyzes the initial step of the lipid cycle reactions in the biosynthesis of the cell wall peptidoglycan: transfers peptidoglycan precursor phospho-MurNAc-pentapeptide from UDP-MurNAc-pentapeptide onto the lipid carrier undecaprenyl phosphate, yielding undecaprenyl-pyrophosphoryl-MurNAc-pentapeptide, known as lipid I. The protein is Phospho-N-acetylmuramoyl-pentapeptide-transferase of Mycolicibacterium smegmatis (strain ATCC 700084 / mc(2)155) (Mycobacterium smegmatis).